A 337-amino-acid polypeptide reads, in one-letter code: Putative 2-aminoethylphosphonate-binding periplasmic protein (337 aa).

The N-terminal stretch at methionine 1–alanine 21 is a signal peptide.

Belongs to the bacterial solute-binding protein 1 family.

It localises to the periplasm. Functionally, probably part of the PhnSTUV complex (TC 3.A.1.11.5) involved in 2-aminoethylphosphonate import. The polypeptide is Putative 2-aminoethylphosphonate-binding periplasmic protein (phnS) (Salmonella typhimurium (strain LT2 / SGSC1412 / ATCC 700720)).